Reading from the N-terminus, the 60-residue chain is MPFVKIDLFEGRSQEQKNELAREVTEVVSRIAKAPKENIHVFINDMPEGTYYPQGELKKK.

The active-site Proton acceptor; via imino nitrogen is the P2.

It belongs to the 4-oxalocrotonate tautomerase family.

The sequence is that of Probable tautomerase SAG1079 from Streptococcus agalactiae serotype V (strain ATCC BAA-611 / 2603 V/R).